The following is a 77-amino-acid chain: Oxyopinin-4a (77 aa).

The first 20 residues, M1 to A20, serve as a signal peptide directing secretion. Residues N21–R47 constitute a propeptide that is removed on maturation. C51 and C57 are disulfide-bonded.

Expressed by the venom gland.

It is found in the secreted. The protein localises to the target cell membrane. Functionally, disrupts cell membranes through the formation of pores. Has antibacterial activity against Gram-positive bacteria S.aureus (MIC=10 uM) and B.subtilis (MIC=0.5 uM) as well as Gram-negative bacteria P.fluorescens (MIC=1 uM) and E.coli (MIC=0.5 uM). Has hemolytic activity against human erythrocytes (EC(50)=7 uM). This chain is Oxyopinin-4a, found in Oxyopes takobius (Lynx spider).